The primary structure comprises 287 residues: ADP-dependent (S)-NAD(P)H-hydrate dehydratase (287 aa).

Residues 7–283 (TTALVKKFIP…PEISTVMKPF (277 aa)) form the YjeF C-terminal domain. Residues alanine 42 and histidine 159 each coordinate (6S)-NADPHX. AMP is bound by residues 196-200 (KGSTD) and glycine 224. (6S)-NADPHX is bound at residue aspartate 225.

It belongs to the NnrD/CARKD family. As to quaternary structure, homotetramer. The cofactor is Mg(2+).

The enzyme catalyses (6S)-NADHX + ADP = AMP + phosphate + NADH + H(+). It carries out the reaction (6S)-NADPHX + ADP = AMP + phosphate + NADPH + H(+). Functionally, catalyzes the dehydration of the S-form of NAD(P)HX at the expense of ADP, which is converted to AMP. Together with NAD(P)HX epimerase, which catalyzes the epimerization of the S- and R-forms, the enzyme allows the repair of both epimers of NAD(P)HX, a damaged form of NAD(P)H that is a result of enzymatic or heat-dependent hydration. The protein is ADP-dependent (S)-NAD(P)H-hydrate dehydratase of Nitrosopumilus maritimus (strain SCM1).